We begin with the raw amino-acid sequence, 191 residues long: ATP-dependent Clp protease proteolytic subunit 1 (191 aa).

Ser-91 functions as the Nucleophile in the catalytic mechanism. His-116 is a catalytic residue.

The protein belongs to the peptidase S14 family. Fourteen ClpP subunits assemble into 2 heptameric rings which stack back to back to give a disk-like structure with a central cavity, resembling the structure of eukaryotic proteasomes.

Its subcellular location is the cytoplasm. It catalyses the reaction Hydrolysis of proteins to small peptides in the presence of ATP and magnesium. alpha-casein is the usual test substrate. In the absence of ATP, only oligopeptides shorter than five residues are hydrolyzed (such as succinyl-Leu-Tyr-|-NHMec, and Leu-Tyr-Leu-|-Tyr-Trp, in which cleavage of the -Tyr-|-Leu- and -Tyr-|-Trp bonds also occurs).. Cleaves peptides in various proteins in a process that requires ATP hydrolysis. Has a chymotrypsin-like activity. Plays a major role in the degradation of misfolded proteins. The sequence is that of ATP-dependent Clp protease proteolytic subunit 1 from Chlamydia pneumoniae (Chlamydophila pneumoniae).